We begin with the raw amino-acid sequence, 294 residues long: N-acetylmuramic acid 6-phosphate etherase (294 aa).

The SIS domain maps to 54-217; that stretch reads TIHSFKSNGR…STASMIGVGK (164 aa). The Proton donor role is filled by glutamate 82. The active site involves glutamate 113.

Belongs to the GCKR-like family. MurNAc-6-P etherase subfamily. Homodimer.

The enzyme catalyses N-acetyl-D-muramate 6-phosphate + H2O = N-acetyl-D-glucosamine 6-phosphate + (R)-lactate. The protein operates within amino-sugar metabolism; N-acetylmuramate degradation. In terms of biological role, specifically catalyzes the cleavage of the D-lactyl ether substituent of MurNAc 6-phosphate, producing GlcNAc 6-phosphate and D-lactate. The protein is N-acetylmuramic acid 6-phosphate etherase of Oceanobacillus iheyensis (strain DSM 14371 / CIP 107618 / JCM 11309 / KCTC 3954 / HTE831).